The sequence spans 151 residues: Ribosome maturation factor RimP (151 aa).

The protein belongs to the RimP family.

It localises to the cytoplasm. Functionally, required for maturation of 30S ribosomal subunits. This Vibrio campbellii (strain ATCC BAA-1116) protein is Ribosome maturation factor RimP.